Here is a 1044-residue protein sequence, read N- to C-terminus: MAAPGRLLLRPRPGGLLLLLPGLLLPLADAFNLDVESPAEYAGPEGSYFGFAVDFFEPSTSSRMFLLVGAPKANTTQPGIVEGGQVLKCECSSSRRCQPIEFDSTGNRDYAKDDPLEFKSHQWFGASVRSKQDKILACAPLYHWRTEMKQEREPVGTCFLQDGTKTVEYAPCRSKNIDADGQGFCQGGFSIDFTKADRVLLGGPGSFYWQGQLISDQVAEIISKYDPNVYSIKYNNQLATRTAQAIFDDSYLGYSVAVGDFNGDGIEDFVSGVPRAARTLGMVYIYDGKNMSSLHNFTGEQMAAYFGFSVAATDINGDDYADVFIGAPLFMDRGSDGKLQEVGQVSVSLQRAVGDFQTTKLNGFEVFARFGSAIAPLGDLDQDGFNDIAIAAPYGGEDKKGLVYIFNGRSTGLNSVPSQILEGQWAAQSMPPSFGYSMKGATDVDRNGYPDLVVGAFGVDRAVLYRARPVVTVNAGLEVYPSILNQDNKICPLPGTALKVSCFNVRFCLKADGKGTLPRKLHFQVELLLDKLKQKGAIRRALFLHNRSPVHSKTMTVFRGGQMQCEELVAYLRDESEFRDKLTPITIFMEYRLDQRTAADATGLQPILNQFTPANVSRQAHILLDCGEDNVCKPKLEVSVNSDQKKIYIGDDNPLTLTVKAQNQGEGAYEAELIVSIPPQADFIGVVRNNEALARLSCAFKTENQTRQVVCDLGNPMKAGTQLLAGLRFSVHQQSEMDTSVKFDLKIQSSNSFDNVSPVVSYKVDLAVLAAVEIRGVSSPDHIFLPIPNWEYKENPETEEDVGPIVQHIYELRNNGPSSFSKAILNLQWPYKYNNNTLLYILHYDIDGPMNCTADTEINPLRIKTPEKNDTAAAGQGERNHLITKRDLTLREGDVHTLGCGIAKCLQITCQVGRLDRGKSAILYVKSLLWTETFMNKENQNHSYSLKSSASFNIIEFPYKNLPIEDLFNSTLVTTNITWGIQPAPMPVPVWVIILAVLAGLLLLAVLVFVMYRMGFFKRVRPPQEEQEREQLQPHENGEGNSET.

The signal sequence occupies residues 1 to 30 (MAAPGRLLLRPRPGGLLLLLPGLLLPLADA). The Extracellular segment spans residues 31–988 (FNLDVESPAE…WGIQPAPMPV (958 aa)). FG-GAP repeat units follow at residues 32–98 (NLDV…RRCQ), 109–170 (DYAK…VEYA), 173–225 (RSKN…ISKY), 237–291 (QLAT…GKNM), 292–357 (SSLH…GDFQ), 358–415 (TTKL…GLNS), and 419–482 (QILE…VYPS). The N-linked (GlcNAc...) asparagine glycan is linked to Asn74. Intrachain disulfides connect Cys89/Cys97, Cys138/Cys158, and Cys172/Cys185. Positions 260, 262, 264, 266, and 268 each coordinate Ca(2+). Asn290 and Asn296 each carry an N-linked (GlcNAc...) asparagine glycan. Ca(2+)-binding residues include Asp314, Asn316, Asp318, Tyr320, Asp322, Asp379, Asp381, Asp383, Phe385, Asp387, Asp443, Asp445, Asn447, Tyr449, and Asp451. Intrachain disulfides connect Cys491–Cys502 and Cys508–Cys565. N-linked (GlcNAc...) asparagine glycosylation is present at Asn615. Intrachain disulfides connect Cys626-Cys632 and Cys698-Cys711. Asn704, Asn835, Asn851, and Asn869 each carry an N-linked (GlcNAc...) asparagine glycan. Disulfide bonds link Cys852-Cys910 and Cys900-Cys905. Residues Asn941, Asn969, and Asn976 are each glycosylated (N-linked (GlcNAc...) asparagine). Residues 989 to 1012 (PVWVIILAVLAGLLLLAVLVFVMY) form a helical membrane-spanning segment. At 1013-1044 (RMGFFKRVRPPQEEQEREQLQPHENGEGNSET) the chain is on the cytoplasmic side. The short motif at 1015–1019 (GFFKR) is the GFFKR motif element. The span at 1023–1038 (PQEEQEREQLQPHENG) shows a compositional bias: basic and acidic residues. The disordered stretch occupies residues 1023-1044 (PQEEQEREQLQPHENGEGNSET).

This sequence belongs to the integrin alpha chain family. Heterodimer of an alpha and a beta subunit. The alpha subunit is composed of a heavy and a light chain linked by a disulfide bond. Alpha-V (ITGAV) associates with either beta-1 (ITGB1), beta-3 (ITGB3), beta-5 (ITGB5), beta-6 (ITGB6) or beta-8 (ITGB8). Interacts with RAB25. Interacts with CIB1. Integrins ITGAV:ITGB3 and ITGAV:ITGB5 interact with FBLN5 (via N-terminus). ITGAV:ITGB3 and ITGAV:ITGB5 interact with CCN3. ITGAV:ITGB3 interacts with ADGRA2. ITGAV:ITGB3 interacts with FGF2; it is likely that FGF2 can simultaneously bind ITGAV:ITGB3 and FGF receptors. ITGAV:ITGB3 interacts with SELP (via C-type lectin domain); the interaction mediates cell-cell interaction and adhesion. ITGAV:ITGB3 is found in a ternary complex with CX3CR1 and CX3CL1. ITGAV:ITGB3 is found in a ternary complex with NRG1 and ERBB3. ITGAV:ITGB3 is found in a ternary complex with FGF1 and FGFR1. ITGAV:ITGB3 is found in a ternary complex with IGF1 and IGF1R. ITGAV:ITGB3 interacts with IGF2. ITGAV:ITGB3 and ITGAV:ITGB6 interact with FBN1. ITGAV:ITGB3 interacts with CD9, CD81 and CD151 (via second extracellular domain). ITGAV:ITGB6 interacts with TGFB1. ITGAV:ITGB3 interacts with PTN. Forms a complex with PTPRZ1 and PTN that stimulates endothelial cell migration through ITGB3 'Tyr-773' phosphorylation. Interacts with TM4SF19.

The protein localises to the cell membrane. It is found in the cell junction. The protein resides in the focal adhesion. Its function is as follows. The alpha-V (ITGAV) integrins are receptors for vitronectin, cytotactin, fibronectin, fibrinogen, laminin, matrix metalloproteinase-2, osteopontin, osteomodulin, prothrombin, thrombospondin, TGFB1 and vWF. They recognize the sequence R-G-D in a wide array of ligands. Alpha-V integrins may play a role in embryo implantation, angiogenesis and wound healing. ITGAV:ITGB3 binds to fractalkine (CX3CL1) and may act as its coreceptor in CX3CR1-dependent fractalkine signaling. ITGAV:ITGB3 binds to NRG1 (via EGF domain) and this binding is essential for NRG1-ERBB signaling. ITGAV:ITGB3 binds to FGF1 and this binding is essential for FGF1 signaling. ITGAV:ITGB3 binds to FGF2 and this binding is essential for FGF2 signaling. ITGAV:ITGB3 binds to IGF1 and this binding is essential for IGF1 signaling. ITGAV:ITGB3 binds to IGF2 and this binding is essential for IGF2 signaling. ITGAV:ITGB3 binds to IL1B and this binding is essential for IL1B signaling. ITGAV:ITGB3 binds to PLA2G2A via a site (site 2) which is distinct from the classical ligand-binding site (site 1) and this induces integrin conformational changes and enhanced ligand binding to site 1. ITGAV:ITGB3 and ITGAV:ITGB6 act as a receptor for fibrillin-1 (FBN1) and mediate R-G-D-dependent cell adhesion to FBN1. Integrin alpha-V/beta-6 or alpha-V/beta-8 (ITGAV:ITGB6 or ITGAV:ITGB8) mediates R-G-D-dependent release of transforming growth factor beta-1 (TGF-beta-1) from regulatory Latency-associated peptide (LAP), thereby playing a key role in TGF-beta-1 activation. ITGAV:ITGB3 acts as a receptor for CD40LG. ITGAV:ITGB3 binds to the Lilrb4a/Gp49b receptor and enhances the Lilrb4a-mediated inhibition of mast cell activation. ITGAV:ITGB3 also suppresses marginal zone B cell antibody production through its interaction with Lilrb4a. ITGAV:ITGB3 acts as a receptor for IBSP and promotes cell adhesion and migration to IBSP. In Mus musculus (Mouse), this protein is Integrin alpha-V (Itgav).